A 170-amino-acid chain; its full sequence is Lipocalin Cav p 2.0101 (170 aa).

The signal sequence occupies residues Met1–Ala16. Cystine bridges form between Cys56–Cys60 and Cys75–Cys168.

Belongs to the calycin superfamily. Lipocalin family. Post-translationally, not N-linked glycosylated. In terms of tissue distribution, expressed in harderian gland (at protein level). Expressed in hair (at protein level). Expressed in submaxillary gland and harderian gland.

The protein resides in the secreted. The chain is Lipocalin Cav p 2.0101 (Lcncavp2) from Cavia porcellus (Guinea pig).